Here is a 373-residue protein sequence, read N- to C-terminus: sn-glycerol-3-phosphate import ATP-binding protein UgpC (373 aa).

The ABC transporter domain occupies 4-235 (LTLSNITKSY…PASVFVATFI (232 aa)). 37–44 (GPSGCGKS) serves as a coordination point for ATP.

The protein belongs to the ABC transporter superfamily. sn-glycerol-3-phosphate importer (TC 3.A.1.1.3) family. In terms of assembly, the complex is composed of two ATP-binding proteins (UgpC), two transmembrane proteins (UgpA and UgpE) and a solute-binding protein (UgpB).

The protein resides in the cell inner membrane. It catalyses the reaction sn-glycerol 3-phosphate(out) + ATP + H2O = sn-glycerol 3-phosphate(in) + ADP + phosphate + H(+). Part of the ABC transporter complex UgpBAEC involved in sn-glycerol-3-phosphate (G3P) import. Responsible for energy coupling to the transport system. The sequence is that of sn-glycerol-3-phosphate import ATP-binding protein UgpC from Psychromonas ingrahamii (strain DSM 17664 / CCUG 51855 / 37).